A 447-amino-acid chain; its full sequence is ATP-dependent protease ATPase subunit HslU (447 aa).

Residues I17 and 59-64 (GVGKTE) contribute to the ATP site. Residues 136–160 (PPARGGFQGEPTAEEKPTEKKESAT) are disordered. Positions 148 to 159 (AEEKPTEKKESA) are enriched in basic and acidic residues. ATP contacts are provided by D260, E325, and R397.

It belongs to the ClpX chaperone family. HslU subfamily. In terms of assembly, a double ring-shaped homohexamer of HslV is capped on each side by a ring-shaped HslU homohexamer. The assembly of the HslU/HslV complex is dependent on binding of ATP.

The protein resides in the cytoplasm. Its function is as follows. ATPase subunit of a proteasome-like degradation complex; this subunit has chaperone activity. The binding of ATP and its subsequent hydrolysis by HslU are essential for unfolding of protein substrates subsequently hydrolyzed by HslV. HslU recognizes the N-terminal part of its protein substrates and unfolds these before they are guided to HslV for hydrolysis. The protein is ATP-dependent protease ATPase subunit HslU of Coxiella burnetii (strain RSA 331 / Henzerling II).